Consider the following 596-residue polypeptide: Pentatricopeptide repeat-containing protein At1g80270, mitochondrial (596 aa).

A mitochondrion-targeting transit peptide spans Met-1–Lys-69. The tract at residues Leu-62 to Asp-119 is disordered. Acidic residues-rich tracts occupy residues Gln-72–Ser-82 and Ser-96–Glu-117. PPR repeat units lie at residues Gly-228 to Leu-262, Ser-263 to Pro-296, Ser-297 to Leu-331, Asp-332 to Ala-366, Asn-367 to Lys-397, Tyr-399 to Ala-433, Ser-434 to Ile-468, Glu-469 to Lys-503, and Met-505 to Ser-539.

It belongs to the PPR family. P subfamily.

Its subcellular location is the mitochondrion. The sequence is that of Pentatricopeptide repeat-containing protein At1g80270, mitochondrial from Arabidopsis thaliana (Mouse-ear cress).